The sequence spans 312 residues: Ribosomal protein L11 methyltransferase (312 aa).

4 residues coordinate S-adenosyl-L-methionine: Thr163, Gly184, Asp206, and Asn248.

The protein belongs to the methyltransferase superfamily. PrmA family.

It localises to the cytoplasm. The enzyme catalyses L-lysyl-[protein] + 3 S-adenosyl-L-methionine = N(6),N(6),N(6)-trimethyl-L-lysyl-[protein] + 3 S-adenosyl-L-homocysteine + 3 H(+). Its function is as follows. Methylates ribosomal protein L11. In Clostridium botulinum (strain 657 / Type Ba4), this protein is Ribosomal protein L11 methyltransferase.